The primary structure comprises 307 residues: Alpha N-terminal protein methyltransferase 1 (307 aa).

Residues 38 to 51 show a composition bias toward low complexity; sequence EPAPAPAAGSNGVA. The interval 38-60 is disordered; that stretch reads EPAPAPAAGSNGVAGEEEAGGGG. S-adenosyl-L-methionine is bound by residues Gly123, Arg128, 145-147, 179-180, and Gln195; these read EPV and LQ.

This sequence belongs to the methyltransferase superfamily. NTM1 family.

The enzyme catalyses N-terminal L-alanyl-L-prolyl-L-lysyl-[protein] + 3 S-adenosyl-L-methionine = N-terminal N,N,N-trimethyl-L-alanyl-L-prolyl-L-lysyl-[protein] + 3 S-adenosyl-L-homocysteine + 3 H(+). It catalyses the reaction N-terminal L-seryl-L-prolyl-L-lysyl-[protein] + 3 S-adenosyl-L-methionine = N-terminal N,N,N-trimethyl-L-seryl-L-prolyl-L-lysyl-[protein] + 3 S-adenosyl-L-homocysteine + 3 H(+). It carries out the reaction N-terminal L-prolyl-L-prolyl-L-lysyl-[protein] + 2 S-adenosyl-L-methionine = N-terminal N,N-dimethyl-L-prolyl-L-prolyl-L-lysyl-[protein] + 2 S-adenosyl-L-homocysteine + 2 H(+). Its function is as follows. Alpha-N-methyltransferase that methylates the N-terminus of target proteins containing the N-terminal motif [Ala/Pro/Ser]-Pro-Lys when the initiator Met is cleaved. Specifically catalyzes mono-, di- or tri-methylation of exposed alpha-amino group of Ala or Ser residue in the [Ala/Ser]-Pro-Lys motif and mono- or di-methylation of Pro in the Pro-Pro-Lys motif. This chain is Alpha N-terminal protein methyltransferase 1, found in Oryza sativa subsp. japonica (Rice).